The following is a 125-amino-acid chain: Small ribosomal subunit protein uS13 (125 aa).

A disordered region spans residues R92–K125.

This sequence belongs to the universal ribosomal protein uS13 family. Part of the 30S ribosomal subunit. Forms a loose heterodimer with protein S19. Forms two bridges to the 50S subunit in the 70S ribosome.

Located at the top of the head of the 30S subunit, it contacts several helices of the 16S rRNA. In the 70S ribosome it contacts the 23S rRNA (bridge B1a) and protein L5 of the 50S subunit (bridge B1b), connecting the 2 subunits; these bridges are implicated in subunit movement. Contacts the tRNAs in the A and P-sites. This is Small ribosomal subunit protein uS13 from Pelodictyon phaeoclathratiforme (strain DSM 5477 / BU-1).